Reading from the N-terminus, the 652-residue chain is Serine/threonine-protein kinase ssp1 (652 aa).

Y58 carries the phosphotyrosine modification. S59 carries the phosphoserine modification. Y63 is subject to Phosphotyrosine. The region spanning 135-409 (YEIIKELGRG…LVEVKLHPWT (275 aa)) is the Protein kinase domain. Residues 141–149 (LGRGMHGKV) and K164 contribute to the ATP site. D267 acts as the Proton acceptor in catalysis. Disordered stretches follow at residues 467–491 (DSSS…SIGL) and 506–529 (NESQ…SSEK). The span at 508–518 (SQKDRERKQVH) shows a compositional bias: basic and acidic residues.

The protein belongs to the protein kinase superfamily. Ser/Thr protein kinase family.

Its subcellular location is the cytoplasm. The catalysed reaction is L-seryl-[protein] + ATP = O-phospho-L-seryl-[protein] + ADP + H(+). It catalyses the reaction L-threonyl-[protein] + ATP = O-phospho-L-threonyl-[protein] + ADP + H(+). In terms of biological role, involved in actin localization and thus in polarized cell growth. The protein is Serine/threonine-protein kinase ssp1 (ssp1) of Schizosaccharomyces pombe (strain 972 / ATCC 24843) (Fission yeast).